The chain runs to 630 residues: Adagio-like protein 1 (630 aa).

A disordered region spans residues 1–36 (MEWDSESDGAGSIGAGEEEEEEEEEEEGGFGGGGGG). Over residues 16-28 (GEEEEEEEEEEEG) the composition is skewed to acidic residues. Positions 48–127 (IEGMLRASGP…SEIRKCIDNG (80 aa)) constitute a PAS domain. Cys-95 carries the S-4a-FMN cysteine modification. Residues 216-262 (SSLFQLTDEVLCQSILSRLSPRDIASVSSVCRRLYLLTRNEDLWRMV) enclose the F-box domain. 4 Kelch repeats span residues 378-428 (LLVV…TLDG), 430-481 (KLVV…VYGG), 483-535 (KILM…AGPP), and 549-601 (RVLI…VVGG).

Belongs to the ADAGIO family. Post-translationally, FMN binds covalently to cysteine after exposure to blue light and is reversed in the dark.

The protein resides in the nucleus. It functions in the pathway protein modification; protein ubiquitination. Component of an E3 ubiquitin ligase complex that plays a central role in blue light-dependent circadian cycles. Acts as a blue light photoreceptor, due to the presence of FMN, that mediates light-regulated protein degradation of critical clock components by targeting them to the proteasome complex. The protein is Adagio-like protein 1 of Oryza sativa subsp. japonica (Rice).